Reading from the N-terminus, the 201-residue chain is MINIWNKSKTVILALFLLFLSQVPLYYVEYENERQNLFGVANKITVNFILIGLLIILIAIMLGIKNGFYKNAKRTLEWKNIILILILIIPSVALDILFSQFIQFHHLGRMDNQIAIDSVMGSLLWFGKILGVALLAPILEESIFRASIYKIFSNNKIAFVFSSLLFTFMHSGYSWVFLIYLPMSLAVTFIYHRRSDVILKS.

5 helical membrane-spanning segments follow: residues 10–30, 44–64, 82–102, 119–139, and 159–179; these read TVIL…YVEY, ITVN…MLGI, ILIL…SQFI, VMGS…APIL, and FVFS…VFLI.

Belongs to the UPF0177 family.

The protein localises to the cell membrane. This Lactococcus lactis subsp. lactis (strain IL1403) (Streptococcus lactis) protein is UPF0177 protein YajF (yajF).